Consider the following 501-residue polypeptide: Probable histidine--tRNA ligase, mitochondrial (501 aa).

Residues 32–54 (TNSNNNNNNNNNNNNNNNNNKNI) are disordered. The span at 33–54 (NSNNNNNNNNNNNNNNNNNKNI) shows a compositional bias: low complexity.

It belongs to the class-II aminoacyl-tRNA synthetase family.

It localises to the mitochondrion matrix. It carries out the reaction tRNA(His) + L-histidine + ATP = L-histidyl-tRNA(His) + AMP + diphosphate + H(+). The chain is Probable histidine--tRNA ligase, mitochondrial (mhisS) from Dictyostelium discoideum (Social amoeba).